The sequence spans 333 residues: MAANAAGPASRYDVTLDQSDAELVEEIAWKLATQATGRPDDAEWVEAARNAWHAWPATLRRDLAGFRRDSGPDGAIVLRGLPVDSMGLPPTPRVNGSVQREASLGAAVLLMTACGLGDPGAFLPEKNGALVQDVVPVPGMEEFQGNAGSTLLTFHNENAFHEHRPDFVMLLCLRADPTGRAGLRTACVRRVLPLLSDSTVDALWAPEFRTAPPPSFQLSGPEEAPAPVLLGDRSDPDLRVDLAATEPVTERAAEALRELQAHFDATAVTHRLLPGELAIVDNRVTVHGRTEFTPRYDGTDRWLQRTFVLTDLRRSRAMRPADGYVLGAAPQPA.

2 residues coordinate L-asparagine: Glu125 and Asn146. His155 and Glu157 together coordinate Fe cation. Glu157 and Asn158 together coordinate L-asparagine. Residue His287 coordinates Fe cation. 2-oxoglutarate is bound at residue Arg301. Position 305 (Arg305) interacts with L-asparagine.

The protein belongs to the clavaminate synthase family. It depends on Fe(2+) as a cofactor.

It catalyses the reaction L-asparagine + 2-oxoglutarate + O2 = (2S,3S)-3-hydroxyasparagine + succinate + CO2. The protein operates within antibiotic biosynthesis; calcium-dependent antibiotic biosynthesis. In terms of biological role, catalyzes the 3-hydroxylation of L-asparagine to (2S,3S)-3-hydroxyasparagine. The 3-hydroxylated asparagine produced is incorporated at position 9 during the biosynthesis of the non-ribosomally synthesized calcium-dependent antibiotic (CDA), a 11-residue acidic lipopeptide lactone. Is able to hydroxylate only free L-asparagine, since it hydroxylates neither a CDA analog with unmodified Asn at position 9 nor a peptidyl-carrier-protein (PCP)-bound asparagine. Is not active toward D-asparagine. In Streptomyces coelicolor (strain ATCC BAA-471 / A3(2) / M145), this protein is L-asparagine oxygenase (asnO).